A 957-amino-acid chain; its full sequence is Ribonuclease 3-like protein 3 (957 aa).

The RNase III 1 domain maps to 4-142; that stretch reads VEAVEKILNY…IAATVFIDVN (139 aa). The DRBM 1 domain occupies 307–382; the sequence is NGRGELIEIC…AYHMIRALES (76 aa). In terms of domain architecture, RNase III 2 spans 415–551; the sequence is VEAVEKILNY…VAGAVYIDVK (137 aa). 2 consecutive DRBM domains span residues 566–645 and 837–912; these read EPIY…KLSE and DEKG…ALES.

Its function is as follows. Ribonuclease that cleaves double-stranded RNA (dsRNA). This Arabidopsis thaliana (Mouse-ear cress) protein is Ribonuclease 3-like protein 3 (RTL3).